The chain runs to 30 residues: MWYLLWFVGILLMCSLSTLVLVWLDPRLKS.

Residues 4–24 (LLWFVGILLMCSLSTLVLVWL) traverse the membrane as a helical segment.

Belongs to the cytochrome ubiquinol oxidase subunit X family. In terms of assembly, able to interact with CydA and CydB upon overexpression.

It is found in the cell inner membrane. Functionally, might be part of cytochrome bd-II oxidase (appB and appC). Able to restore reductant resistance to a cydX deletion mutant upon overexpression. CydX and this protein may have some functional overlap. The chain is Putative cytochrome bd-II ubiquinol oxidase subunit AppX (appX) from Escherichia coli (strain K12).